The chain runs to 186 residues: Ribosome-recycling factor (186 aa).

This sequence belongs to the RRF family.

The protein localises to the cytoplasm. Functionally, responsible for the release of ribosomes from messenger RNA at the termination of protein biosynthesis. May increase the efficiency of translation by recycling ribosomes from one round of translation to another. In Brucella melitensis biotype 2 (strain ATCC 23457), this protein is Ribosome-recycling factor.